A 180-amino-acid chain; its full sequence is MSEPELQLVARRIRSFPDFPIPGVLFRDISPLLKDPDSFRASIRLLASHLKSLHGGKIDYIAGLDSRGFLFGPSLAQELGVGCVLIRKRGKLPGPTLSASYALEYGKAELEIQKDALEPGQRVVIVDDLLATGGTMCAACELLNQLRAEVVECVSLVELTSLKGRERLGPIPFFSLLQYD.

At S2 the chain carries N-acetylserine. A phosphoserine mark is found at S15 and S30. At Y60 the chain carries Phosphotyrosine. A Phosphoserine modification is found at S66. K114 carries the post-translational modification N6-acetyllysine. T135 is modified (phosphothreonine).

It belongs to the purine/pyrimidine phosphoribosyltransferase family. In terms of assembly, homodimer.

The protein localises to the cytoplasm. The catalysed reaction is AMP + diphosphate = 5-phospho-alpha-D-ribose 1-diphosphate + adenine. It participates in purine metabolism; AMP biosynthesis via salvage pathway; AMP from adenine: step 1/1. Its function is as follows. Catalyzes a salvage reaction resulting in the formation of AMP, that is energically less costly than de novo synthesis. This is Adenine phosphoribosyltransferase from Mastomys natalensis (African soft-furred rat).